The primary structure comprises 150 residues: UPF0756 membrane protein Dd1591_2981 (150 aa).

4 helical membrane passes run 10–32, 51–71, 88–108, and 127–147; these read ILLA…AILF, YGLS…IASG, LMAV…VVLM, and ALFR…SLLI.

Belongs to the UPF0756 family.

It localises to the cell membrane. This is UPF0756 membrane protein Dd1591_2981 from Dickeya chrysanthemi (strain Ech1591) (Dickeya zeae (strain Ech1591)).